Consider the following 285-residue polypeptide: Probable endonuclease 4 (285 aa).

Residues H69, H109, E145, D179, H182, H216, D229, H231, and E261 each coordinate Zn(2+).

The protein belongs to the AP endonuclease 2 family. Zn(2+) serves as cofactor.

It catalyses the reaction Endonucleolytic cleavage to 5'-phosphooligonucleotide end-products.. Functionally, endonuclease IV plays a role in DNA repair. It cleaves phosphodiester bonds at apurinic or apyrimidinic (AP) sites, generating a 3'-hydroxyl group and a 5'-terminal sugar phosphate. The protein is Probable endonuclease 4 of Salmonella paratyphi A (strain AKU_12601).